The chain runs to 1724 residues: MSEILCQWLNQELRVSRTVSPKSFAKAFSNGYLIGEVLFKFELQSDFAEFSESRGSTAKLNNFSRLQPTLHLLGLQFDQNVAQSIITEKPGAATKLLYQLYIALQKKKKTGLTGLEIQTMQPQTNLRLQTLKSEAFREQRLNRRRQNEIMAKIQAAIIQIPKPESNRTLKAIEAQKLMKKKKEAEDVANEIKKFEALIKKDLQIKESVSKTSLETTDQTTAELLNTYSDDDYIKKIQKRLEEDAFAREQREKRRRRLLMDQLMAHEAQEEAYREEQLIHRLMRQSQQERRIAVQLMHVRHEKEVLWQNRIFREKQFEERRLKDFQDALDREAALAKQAKIDFAEQTLREKEIHEKISVERAQQRYKKHYGICAEILDQMLDLCTKVADYRLLTNNLIPHKMMHDWKELFFSGIPIYEQTSLTHGQTEPTEDHRAEVKKRNLLDSKDYEDYKNMVGEWALPEDMVNSSPPSNNSILGHVLLRLIEKADPSASNAEATELPSLAVKGCILGKTLSGKTTVLKSLQNDFPVHVLSIDTLVQEAIQAFHERQKSGKTPPTQEDDKRDPVVNQEKVSKTQDKNVLAVSPVPGDRTSQKEGVKINEFEQFRSSDSFLSLSMRAQLGAKSELMLRRGKSIPDILLVSILVNAIKEIPVDQSWVLDGFPITLNQAKLLEEALTGYKRKFLQLKKKKEQMPTLALDPSTSTEVSLLPSALDFVILLDISDNSSLARTNDIIAKEISHEISHENVGRPGTGTSQDNKSEDRNLRDHIQHRIVGFLDNWPLLEEWFTQPKNILTKVNAEIDEALLCQKVKEIFATETVNKKIKVEKTLEEKETEKKAGAPPAEPPAMSPPLSSEAEKDKELHQAKTPGKGKTQSVSPKGKAQGGKVSVKKSPVGSAEVSPTPTAPPPPKAGTEEWVYVNEPIPEELPSFLVPYWELIEKSYINHIKTVLRHLRERQHNVLSYLYETRTSFQEFLRRPDHKQDFVSQWQADFNSVPEDLWEDEETKAELHQRVNDLRDRLWDICEARKEEAEQERLDIINESWLQDSIGITMNHFFSLMQAEVNRFQDTKRLLQDYYRAMESKIPLEDSKKFTRVPLVQLDGKEISESQLRIPLVPRISNSPENSAVKPKVGTFLKGRSDPPLEVLEANFEIDEKILLDTWQQASLAISNMVAAEVHQRLTEEEKEPPQLDSKEKSPQSGANKKAKKEKEAPKKKKTDKKGKGKSSPVAEVSPVTVTPEEMAEMEKRNELRLRIKEEHLAALQTEEQAAQFRLELIKLKALSVLEDLVTKVIDVYRLMEKWLGKRYLNEMASIQKLTELARYHIETATKIQNEIYLSQEDFYINGDIKVFPDPSPPTRPPPVEREENGTLTIEQLDNLRDQFLDMAPKGIIGNKAFSDILLDLITLNLGTNNFPSSWMHLSQLDLQEITSLLTVNTEFVDWRKFLMVTAMPWPMALEDELLDTLQRFKALDEAQTGTITYEQYKQAGLWFSGDEDIKIPENPLEPLPFNRQEHLIEFFFRLFADCEKEPPQLDYTQMLLYFACHPDTLEGVYRALSVAVGTHIFRQVETPMLMAEKTSISTVSPIEEFPETEESSAKEDRELKEEKDDQKEEEIPENANTEKISMETLLKVFGGGNEVLDANRFASYLKSENIYAENFIKTFQDLGARNLEPIAVNILLKHPYIQDLIANYVDYKFPDIKMILQRSEHAQGSDGERSPSRLTDEKK.

A Calponin-homology (CH) domain is found at 1-105 (MSEILCQWLN…LLYQLYIALQ (105 aa)). Coiled coils occupy residues 170–203 (KAIE…KDLQ) and 255–351 (RRLL…REKE). Residues 545–576 (HERQKSGKTPPTQEDDKRDPVVNQEKVSKTQD) are disordered. The span at 558–576 (EDDKRDPVVNQEKVSKTQD) shows a compositional bias: basic and acidic residues. Residues 665–691 (NQAKLLEEALTGYKRKFLQLKKKKEQM) adopt a coiled-coil conformation. Residues 828–910 (EEKETEKKAG…PTAPPPPKAG (83 aa)) form a disordered region. Over residues 853–862 (EAEKDKELHQ) the composition is skewed to basic and acidic residues. Positions 995 to 1021 (EDLWEDEETKAELHQRVNDLRDRLWDI) form a coiled coil. Residues 1177-1194 (RLTEEEKEPPQLDSKEKS) show a composition bias toward basic and acidic residues. Disordered regions lie at residues 1177–1241 (RLTE…EMAE), 1580–1618 (VSPI…NANT), and 1704–1724 (SEHA…DEKK). Residues 1210 to 1221 (PKKKKTDKKGKG) show a composition bias toward basic residues. The segment at 1228-1580 (EVSPVTVTPE…MAEKTSISTV (353 aa)) is interaction with IFT20. The span at 1592–1607 (SSAKEDRELKEEKDDQ) shows a compositional bias: basic and acidic residues.

In terms of assembly, interacts (via C-terminus) with IFT20. Interacts with DYNC1I2. As to expression, highly expressed in testis, where it primarily localizes to late spermatocytes, round spermatids and elongating spermatids (at protein level). Found in Sertoli cells of the testis (at protein level). Expressed at lower levels in epididymis (at protein level). Detected in lung, brain, liver and kidney. Also detected in bone, cartilage, trachea, pituitary gland and eye. Expressed in osteoblasts and chondrocytes.

Its subcellular location is the cell projection. The protein localises to the cilium. It is found in the flagellum. The protein resides in the cytoplasm. It localises to the cytoskeleton. Its subcellular location is the golgi apparatus. Required for correct axoneme development in spermatozoa. Important for normal development of the manchette and sperm head morphology. Essential for male fertility. Plays a role in localization of the intraflagellar transport protein IFT20 to the manchette, suggesting function as an adapter for dynein-mediated protein transport during spermatogenesis. Also plays a role in bone growth where it seems to be required for normal osteoblast differentiation. The chain is Sperm flagellar protein 2 (Spef2) from Mus musculus (Mouse).